The chain runs to 591 residues: Transcription factor COE1 (591 aa).

Met1 is modified (N-acetylmethionine). A compositionally biased stretch (polar residues) spans 1-14 (MFGIQESIQRSGSS). Residues 1–21 (MFGIQESIQRSGSSMKEEPLG) are disordered. Residue Lys16 forms a Glycyl lysine isopeptide (Lys-Gly) (interchain with G-Cter in SUMO1); alternate linkage. Residue Lys16 forms a Glycyl lysine isopeptide (Lys-Gly) (interchain with G-Cter in SUMO2); alternate linkage. Positions 63–66 (RKSN) are interaction with DNA. Residues 151–170 (CRVLLTHEIMCSRCCDKKSC) form a C5-type zinc finger. Interaction with DNA stretches follow at residues 197–204 (NCLKNAGN) and 236–239 (NNSK). The IPT/TIG domain maps to 262–345 (PCIKAISPSE…KGTPGRFIYT (84 aa)). Residues 457–480 (GFTRNSSSVSPHGYVPSTTPQQTN) are disordered.

It belongs to the COE family. In terms of assembly, homodimer. Interacts with ZNF423 and ZNF521, leading to prevent EBF1 to bind DNA and activate target genes. Interacts with CCR4-NOT component CNOT3. (Microbial infection) Interacts with Epstein-barr virus protein EBNA2.

It is found in the nucleus. In terms of biological role, key pioneer transcription factor of B-cell specification and commitment. Recognizes variations of the palindromic sequence 5'-ATTCCCNNGGGAATT-3'. Operates in a transcription factor network to activate B-cell-specific genes and repress genes associated with alternative cell fates. For instance, positively regulates many B-cell specific genes including BCR or CD40 while repressing genes that direct cells into alternative lineages, including GATA3 and TCF7 for the T-cell lineage. In addition to its role during lymphopoiesis, controls the thermogenic gene program in adipocytes during development and in response to environmental cold. Functionally, (Microbial infection) Acts as a chromatin anchor for Epstein-Barr virus EBNA2 to mediate the assembly of EBNA2 chromatin complexes in B-cells. In addition, binds to the viral LMP1 proximal promoter and promotes its expression during latency. This is Transcription factor COE1 (EBF1) from Homo sapiens (Human).